A 413-amino-acid polypeptide reads, in one-letter code: Mitochondrial carrier protein MTM1 (413 aa).

Solcar repeat units follow at residues 59-193 (IGFT…FRNR), 205-305 (MTFC…IKKR), and 318-406 (GVFG…VKYV). A run of 6 helical transmembrane segments spans residues 65–85 (VFSA…LDVV), 170–190 (NAGL…YDMF), 204–226 (AMTF…TVCY), 284–304 (QLAR…PIKK), 316–336 (LVGV…IAAA), and 378–399 (LFMG…VVSF).

Belongs to the mitochondrial carrier (TC 2.A.29) family. Ubiquitous.

The protein localises to the mitochondrion inner membrane. In terms of biological role, involved in the mitochondrial activation of MSD1 by specifically facilitating insertion of the essential manganese cofactor. Has the ability to activate iron regulon in an iron-dependent manner. This is Mitochondrial carrier protein MTM1 (MTM1) from Arabidopsis thaliana (Mouse-ear cress).